Here is a 306-residue protein sequence, read N- to C-terminus: Non-specific ribonucleoside hydrolase RihC (306 aa).

Histidine 235 is a catalytic residue.

Belongs to the IUNH family. RihC subfamily.

Functionally, hydrolyzes both purine and pyrimidine ribonucleosides with a broad-substrate specificity. This Salmonella schwarzengrund (strain CVM19633) protein is Non-specific ribonucleoside hydrolase RihC.